The chain runs to 240 residues: Phosphoribosyl isomerase A (240 aa).

Asp11 functions as the Proton acceptor in the catalytic mechanism. The active-site Proton donor is the Asp130.

Belongs to the HisA/HisF family. In terms of assembly, monomer.

The protein resides in the cytoplasm. The enzyme catalyses 1-(5-phospho-beta-D-ribosyl)-5-[(5-phospho-beta-D-ribosylamino)methylideneamino]imidazole-4-carboxamide = 5-[(5-phospho-1-deoxy-D-ribulos-1-ylimino)methylamino]-1-(5-phospho-beta-D-ribosyl)imidazole-4-carboxamide. The catalysed reaction is N-(5-phospho-beta-D-ribosyl)anthranilate = 1-(2-carboxyphenylamino)-1-deoxy-D-ribulose 5-phosphate. It functions in the pathway amino-acid biosynthesis; L-histidine biosynthesis; L-histidine from 5-phospho-alpha-D-ribose 1-diphosphate: step 4/9. It participates in amino-acid biosynthesis; L-tryptophan biosynthesis; L-tryptophan from chorismate: step 3/5. Functionally, catalyzes the isomerization of the aminoaldose moiety of ProFAR to the aminoketose of PRFAR in the biosynthesis pathway for histidine and the isomerization of the aminoaldose PRA to the aminoketose CdRP in the biosynthsis pathway for tryptophan. This chain is Phosphoribosyl isomerase A (priA), found in Streptomyces coelicolor (strain ATCC BAA-471 / A3(2) / M145).